The chain runs to 674 residues: tRNA 5-methylaminomethyl-2-thiouridine biosynthesis bifunctional protein MnmC (674 aa).

The interval 1–246 is tRNA (mnm(5)s(2)U34)-methyltransferase; the sequence is MFIMSSISHA…KREMIAGSLS (246 aa). The interval 272 to 674 is FAD-dependent cmnm(5)s(2)U34 oxidoreductase; the sequence is IGGGIASATL…RKGKALTQKV (403 aa).

It in the N-terminal section; belongs to the methyltransferase superfamily. tRNA (mnm(5)s(2)U34)-methyltransferase family. In the C-terminal section; belongs to the DAO family. The cofactor is FAD.

The protein resides in the cytoplasm. It catalyses the reaction 5-aminomethyl-2-thiouridine(34) in tRNA + S-adenosyl-L-methionine = 5-methylaminomethyl-2-thiouridine(34) in tRNA + S-adenosyl-L-homocysteine + H(+). Catalyzes the last two steps in the biosynthesis of 5-methylaminomethyl-2-thiouridine (mnm(5)s(2)U) at the wobble position (U34) in tRNA. Catalyzes the FAD-dependent demodification of cmnm(5)s(2)U34 to nm(5)s(2)U34, followed by the transfer of a methyl group from S-adenosyl-L-methionine to nm(5)s(2)U34, to form mnm(5)s(2)U34. The protein is tRNA 5-methylaminomethyl-2-thiouridine biosynthesis bifunctional protein MnmC of Vibrio cholerae serotype O1 (strain ATCC 39315 / El Tor Inaba N16961).